The primary structure comprises 186 residues: Acireductone dioxygenase (186 aa).

Positions 96, 98, 102, and 140 each coordinate Fe(2+). Ni(2+) contacts are provided by histidine 96, histidine 98, glutamate 102, and histidine 140.

This sequence belongs to the acireductone dioxygenase (ARD) family. As to quaternary structure, monomer. Requires Fe(2+) as cofactor. Ni(2+) is required as a cofactor.

It carries out the reaction 1,2-dihydroxy-5-(methylsulfanyl)pent-1-en-3-one + O2 = 3-(methylsulfanyl)propanoate + CO + formate + 2 H(+). It catalyses the reaction 1,2-dihydroxy-5-(methylsulfanyl)pent-1-en-3-one + O2 = 4-methylsulfanyl-2-oxobutanoate + formate + 2 H(+). It functions in the pathway amino-acid biosynthesis; L-methionine biosynthesis via salvage pathway; L-methionine from S-methyl-5-thio-alpha-D-ribose 1-phosphate: step 5/6. Functionally, catalyzes 2 different reactions between oxygen and the acireductone 1,2-dihydroxy-3-keto-5-methylthiopentene (DHK-MTPene) depending upon the metal bound in the active site. Fe-containing acireductone dioxygenase (Fe-ARD) produces formate and 2-keto-4-methylthiobutyrate (KMTB), the alpha-ketoacid precursor of methionine in the methionine recycle pathway. Ni-containing acireductone dioxygenase (Ni-ARD) produces methylthiopropionate, carbon monoxide and formate, and does not lie on the methionine recycle pathway. In Methylococcus capsulatus (strain ATCC 33009 / NCIMB 11132 / Bath), this protein is Acireductone dioxygenase.